The following is a 218-amino-acid chain: MIVPKEKIEEAVKQALSKENNPKRGFTQSVELIIAFKDVDMKRGDIKLREAIVLPKPPSKPRNVLVVPSLEQMESAKRAEPNVILSKEELQKLQGAKRAVKKLASKNQWFLIAQDSMSLAGRILGPSLGPRGKFPTPLPSSSDVSEYILRYKRSTLVKTKDQPQTQTFVGTEDQPSGDLAENVFAVLNSIEGKIKGPAYIKAIYVKTSMGKPVQINLK.

This sequence belongs to the universal ribosomal protein uL1 family. As to quaternary structure, part of the 50S ribosomal subunit.

Functionally, binds directly to 23S rRNA. Probably involved in E site tRNA release. Its function is as follows. Protein L1 is also a translational repressor protein, it controls the translation of its operon by binding to its mRNA. The chain is Large ribosomal subunit protein uL1 from Metallosphaera sedula (strain ATCC 51363 / DSM 5348 / JCM 9185 / NBRC 15509 / TH2).